The sequence spans 457 residues: Phosphoglucosamine mutase (457 aa).

Serine 106 functions as the Phosphoserine intermediate in the catalytic mechanism. Mg(2+) contacts are provided by serine 106, aspartate 245, aspartate 247, and aspartate 249. Serine 106 is modified (phosphoserine).

Belongs to the phosphohexose mutase family. Mg(2+) is required as a cofactor. Activated by phosphorylation.

It catalyses the reaction alpha-D-glucosamine 1-phosphate = D-glucosamine 6-phosphate. Catalyzes the conversion of glucosamine-6-phosphate to glucosamine-1-phosphate. This Methylibium petroleiphilum (strain ATCC BAA-1232 / LMG 22953 / PM1) protein is Phosphoglucosamine mutase.